The chain runs to 146 residues: Cyanate hydratase (146 aa).

Catalysis depends on residues Arg-87, Glu-90, and Ser-113.

This sequence belongs to the cyanase family.

The catalysed reaction is cyanate + hydrogencarbonate + 3 H(+) = NH4(+) + 2 CO2. Its function is as follows. Catalyzes the reaction of cyanate with bicarbonate to produce ammonia and carbon dioxide. The protein is Cyanate hydratase of Nostoc sp. (strain PCC 7120 / SAG 25.82 / UTEX 2576).